A 345-amino-acid chain; its full sequence is Ferrochelatase (345 aa).

Fe cation contacts are provided by H215 and E296.

This sequence belongs to the ferrochelatase family.

It localises to the cytoplasm. The enzyme catalyses heme b + 2 H(+) = protoporphyrin IX + Fe(2+). The protein operates within porphyrin-containing compound metabolism; protoheme biosynthesis; protoheme from protoporphyrin-IX: step 1/1. Its function is as follows. Catalyzes the ferrous insertion into protoporphyrin IX. This is Ferrochelatase from Rhodopseudomonas palustris (strain HaA2).